We begin with the raw amino-acid sequence, 266 residues long: Integral membrane protein 2B (266 aa).

The Cytoplasmic segment spans residues 1–54 (MVKVTFNSALAQKEAKKDEPKSSEEALIAPPDAVAVDCKDPDDVVPVGQRRAWC). The helical; Signal-anchor for type II membrane protein transmembrane segment at 55–75 (WCMCFGLAFMLAGVILGGAYL) threads the bilayer. The Lumenal segment spans residues 76–266 (YKYFALQPDD…KFAVETLICS (191 aa)). The segment at 102 to 134 (EPSADAPAARYQTIEENIKIFEEDAVEFISVPV) is necessary for interaction with APP and inhibitor effects on APP processing. Residues 137 to 231 (FADSDPANIV…LCHDKETYKL (95 aa)) form the BRICHOS domain. Disulfide bonds link C164–C223 and C248–C265. N-linked (GlcNAc...) asparagine glycosylation occurs at N170.

The protein belongs to the ITM2 family. In terms of assembly, homodimer; disulfide-linked. Interacts with SPPL2A and SPPL2B. Interacts with APP. Mature BRI2 (mBRI2) interacts with the APP amyloid-beta A4 protein; the interaction occurs at the cell surface and in the endocytic compartments and enable alpha- and beta-secretase-induced APP cleavage inhibition. Mature BRI2 (mBRI2) interacts with the APP C99; the interaction occurs in the endocytic compartments and enable gamma-secretase-induced C99 cleavage inhibition. May form heterodimers with Bri23 peptide and APP amyloid-beta protein 40. Interacts with ADAM7 in sperm; the interaction increases following capacitation. The ectodomain C-terminal part of the imBRI2 is processed by furin producing a secreted Bri23 peptide and a mature BRI2, membrane form (mBRI2). The remaining part of the ectodomain of mBRI2 containing the BRICHOS domain is cleaved by ADAM10 and is secreted (BRI2C, soluble form). The membrane-bound N-terminal fragment (BRI2C, membrane form) is further proteolytically processed by SPPL2A and SPPL2B through regulated intramembrane proteolysis producing a secreted C-peptide and a BRI2 intracellular domain (BRI2 ICD) released in the cytosol. Shedding by ADAM10 facilitates intramembrane cleavage but is not absolutely required for BRI2 ICD generation. Post-translationally, glycosylation at Asn-170 is important for cell surface localization, but doesn't affect furin- and ADAM10-induced proteolytic processing.

It localises to the golgi apparatus membrane. It is found in the cell membrane. The protein localises to the endosome membrane. Its subcellular location is the secreted. In terms of biological role, plays a regulatory role in the processing of the amyloid-beta A4 precursor protein (APP) and acts as an inhibitor of the amyloid-beta peptide aggregation and fibrils deposition. Plays a role in the induction of neurite outgrowth. Functions as a protease inhibitor by blocking access of secretases to APP cleavage sites. Mature BRI2 (mBRI2) functions as a modulator of the amyloid-beta A4 precursor protein (APP) processing leading to a strong reduction in the secretion of secretase-processed amyloid-beta protein 40 and amyloid-beta protein 42. Functionally, bri23 peptide prevents aggregation of APP amyloid-beta protein 42 into toxic oligomers. In Rattus norvegicus (Rat), this protein is Integral membrane protein 2B (Itm2b).